Here is a 380-residue protein sequence, read N- to C-terminus: Succinate--CoA ligase [ADP-forming] subunit beta (380 aa).

One can recognise an ATP-grasp domain in the interval 9-237 (RDLLARFGIP…PSAEPEAERR (229 aa)). ATP is bound by residues K45, 52–54 (GRG), V94, and E99. Residues N192 and D206 each contribute to the Mg(2+) site. Substrate-binding positions include N257 and 314 to 316 (GIT).

This sequence belongs to the succinate/malate CoA ligase beta subunit family. In terms of assembly, heterotetramer of two alpha and two beta subunits. The cofactor is Mg(2+).

The enzyme catalyses succinate + ATP + CoA = succinyl-CoA + ADP + phosphate. It carries out the reaction GTP + succinate + CoA = succinyl-CoA + GDP + phosphate. It participates in carbohydrate metabolism; tricarboxylic acid cycle; succinate from succinyl-CoA (ligase route): step 1/1. Its function is as follows. Succinyl-CoA synthetase functions in the citric acid cycle (TCA), coupling the hydrolysis of succinyl-CoA to the synthesis of either ATP or GTP and thus represents the only step of substrate-level phosphorylation in the TCA. The beta subunit provides nucleotide specificity of the enzyme and binds the substrate succinate, while the binding sites for coenzyme A and phosphate are found in the alpha subunit. The sequence is that of Succinate--CoA ligase [ADP-forming] subunit beta from Chloroflexus aurantiacus (strain ATCC 29366 / DSM 635 / J-10-fl).